We begin with the raw amino-acid sequence, 492 residues long: MLELRSCSNLVNSSRRLVPLVTYSGLSAITLPKSRFYSQPSALEVQGTSDSRSDNILDELKQRGLVSQVSQPESFLRTKLNGNDKIKLYCGVDPTAQSLHLGNLVPLMVLLHFYVKGHDIVTVIGGATGKVGDPSGRKTERDVMENDIRQSNVASISQQLQRFFKNGLEYYRNRCALTEDVPSGKYTPRNNFNWWKDIKMLDFLADFGRHIRVQSMLARDSISSRLQTKNGLGFNEFTYQVLQAYDFYHLYKEENVTIQVGGNDQWGNITAGIDLINRIQPIKNKGLPFGITVPLLTTATGEKFGKSAGNAVFIDPSINTAYDVYQFFYNTLDADVPKFLKIFTFLNSSEIKKIVETHIKSPSLRYGQTLLAKEVTDMLYGVGSGSDSEALSNIIFGRYDGTLSAAKLVDLCKKARILQYADREIDLIKLICKLVNCSVSEARRKLSQGSVYLHHSKSKVNENISNLAPFLIDDRVLILRIGKQKCFIIEMR.

Tyr89 serves as a coordination point for L-tyrosine. Residue Asp93 participates in ATP binding. Residues 94 to 103 (PTAQSLHLGN) carry the 'HIGH' region motif. Positions 133, 239, 243, 246, and 265 each coordinate L-tyrosine. The 'KMSKS' region signature appears at 303 to 307 (KFGKS). Lys306 is an ATP binding site.

This sequence belongs to the class-I aminoacyl-tRNA synthetase family. Homodimer.

It is found in the mitochondrion matrix. It carries out the reaction tRNA(Tyr) + L-tyrosine + ATP = L-tyrosyl-tRNA(Tyr) + AMP + diphosphate + H(+). Functionally, catalyzes the attachment of tyrosine to tRNA(Tyr) in a two-step reaction: tyrosine is first activated by ATP to form Tyr-AMP and then transferred to the acceptor end of tRNA(Tyr). The protein is Tyrosine--tRNA ligase, mitochondrial (MSY1) of Saccharomyces cerevisiae (strain ATCC 204508 / S288c) (Baker's yeast).